Reading from the N-terminus, the 111-residue chain is Iron-sulfur cluster assembly protein CyaY (111 aa).

This sequence belongs to the frataxin family.

Functionally, involved in iron-sulfur (Fe-S) cluster assembly. May act as a regulator of Fe-S biogenesis. This chain is Iron-sulfur cluster assembly protein CyaY, found in Cupriavidus pinatubonensis (strain JMP 134 / LMG 1197) (Cupriavidus necator (strain JMP 134)).